The chain runs to 87 residues: Defensin-like protein 176 (87 aa).

The N-terminal stretch at 1–23 (MAKATSSLVVPIIFLVIFALVEQ) is a signal peptide. Intrachain disulfides connect Cys-27-Cys-66, Cys-36-Cys-55, Cys-39-Cys-60, and Cys-43-Cys-62.

This sequence belongs to the DEFL family.

It is found in the secreted. The sequence is that of Defensin-like protein 176 (LCR65) from Arabidopsis thaliana (Mouse-ear cress).